A 904-amino-acid chain; its full sequence is MICAL-like protein 2 (904 aa).

Residues methionine 1–histidine 107 enclose the Calponin-homology (CH) domain. The segment at methionine 1 to proline 260 is forms an intramolecular interaction with the C-terminal coiled coil domain keeping the protein in a closed conformation. Residues serine 110, serine 143, and serine 153 each carry the phosphoserine modification. The disordered stretch occupies residues glycine 117 to alanine 178. Over residues serine 143–serine 153 the composition is skewed to pro residues. The region spanning serine 186–alanine 248 is the LIM zinc-binding domain. Serine 249 carries the phosphoserine modification. The disordered stretch occupies residues lysine 251–glutamate 722. Residues glycine 261–glutamine 388 form a necessary and sufficient for interaction with actinins region. The tract at residues glycine 261–glutamate 697 is mediates targeting to the cell plasma membrane. Residues serine 267–glutamine 277 show a composition bias toward polar residues. Low complexity-rich tracts occupy residues asparagine 293–valine 314 and serine 349–proline 362. Serine 294 is subject to Phosphoserine. Pro residues predominate over residues alanine 363–alanine 374. Over residues alanine 385–threonine 400 the composition is skewed to low complexity. Polar residues predominate over residues proline 408–serine 433. Residues alanine 459–alanine 480 are compositionally biased toward low complexity. Phosphoserine is present on residues serine 494 and serine 504. Composition is skewed to low complexity over residues leucine 520–alanine 534 and serine 542–arginine 553. The span at lysine 564–glutamate 578 shows a compositional bias: polar residues. Residues proline 593–arginine 622 are compositionally biased toward basic and acidic residues. Position 598 is a phosphoserine (serine 598). A Phosphothreonine modification is found at threonine 644. Over residues proline 647 to proline 661 the composition is skewed to pro residues. Serine 649, serine 658, serine 660, and serine 726 each carry phosphoserine. A forms an intramolecular interaction with the N-terminal Calponin-homology and LIM zinc-binding domains-containing region keeping the protein in a closed conformation region spans residues glutamate 698 to leucine 807. The region spanning threonine 723–aspartate 874 is the bMERB domain. Positions leucine 735–aspartate 771 form a coiled coil. The mediates interaction with RAB13 and is required for transition from the closed to the opened conformation stretch occupies residues leucine 807–serine 903.

Interacts with RAB13 (GTP-bound form); competes with RAB8A and is involved in tight junctions assembly. Interacts with RAB8A; competes with RAB13 and is involved in E-cadherin endocytic recycling. Interacts with RAB8B. Interacts (preferentially in opened conformation) with ACTN1 and ACTN4; stimulated by RAB13 activation. Interacts (via calponin-homology (CH) domain) with the filamins FLNA, FLNB and FLNC (via actin-binding domain).

The protein resides in the cell membrane. It is found in the cell junction. It localises to the tight junction. The protein localises to the recycling endosome. Its subcellular location is the cell projection. The protein resides in the cytoplasm. It is found in the cytoskeleton. Functionally, effector of small Rab GTPases which is involved in junctional complexes assembly through the regulation of cell adhesion molecules transport to the plasma membrane and actin cytoskeleton reorganization. Regulates the endocytic recycling of occludins, claudins and E-cadherin to the plasma membrane and may thereby regulate the establishment of tight junctions and adherens junctions. In parallel, may regulate actin cytoskeleton reorganization directly through interaction with F-actin or indirectly through actinins and filamins. Most probably involved in the processes of epithelial cell differentiation, cell spreading and neurite outgrowth. Undergoes liquid-liquid phase separation to form tubular recycling endosomes. Plays 2 sequential roles in the biogenesis of tubular recycling endosomes: first organizes phase separation and then the closed form formed by interaction with RAB8A promotes endosomal tubulation. The protein is MICAL-like protein 2 of Homo sapiens (Human).